An 82-amino-acid chain; its full sequence is uncharacterized protein (82 aa).

An N-terminal signal peptide occupies residues 1 to 19 (MKNLLKILLIIAFANPVFA).

This is an uncharacterized protein from Rickettsia prowazekii (strain Madrid E).